Here is a 130-residue protein sequence, read N- to C-terminus: L-ectoine synthase (130 aa).

This sequence belongs to the ectoine synthase family.

It carries out the reaction (2S)-4-acetamido-2-aminobutanoate = L-ectoine + H2O. The protein operates within amine and polyamine biosynthesis; ectoine biosynthesis; L-ectoine from L-aspartate 4-semialdehyde: step 3/3. In terms of biological role, catalyzes the circularization of gamma-N-acetyl-alpha,gamma-diaminobutyric acid (ADABA) to ectoine (1,4,5,6-tetrahydro-2-methyl-4-pyrimidine carboxylic acid), which is an excellent osmoprotectant. The sequence is that of L-ectoine synthase from Mycobacteroides abscessus (strain ATCC 19977 / DSM 44196 / CCUG 20993 / CIP 104536 / JCM 13569 / NCTC 13031 / TMC 1543 / L948) (Mycobacterium abscessus).